A 498-amino-acid chain; its full sequence is Probable malate:quinone oxidoreductase 2 (498 aa).

Belongs to the MQO family. FAD is required as a cofactor.

The enzyme catalyses (S)-malate + a quinone = a quinol + oxaloacetate. It functions in the pathway carbohydrate metabolism; tricarboxylic acid cycle; oxaloacetate from (S)-malate (quinone route): step 1/1. In Staphylococcus aureus (strain MW2), this protein is Probable malate:quinone oxidoreductase 2.